A 490-amino-acid chain; its full sequence is Betaine aldehyde dehydrogenase (490 aa).

Asp-93 contributes to the K(+) binding site. 150–152 (GAW) provides a ligand contact to NAD(+). The Charge relay system role is filled by Lys-162. 176–179 (KPSE) lines the NAD(+) pocket. Val-180 lines the K(+) pocket. NAD(+) is bound at residue 230-233 (GIAS). Leu-246 contributes to the K(+) binding site. The active-site Proton acceptor is the Glu-252. Gly-254, Cys-286, and Glu-387 together coordinate NAD(+). The Nucleophile role is filled by Cys-286. Residue Cys-286 is modified to Cysteine sulfenic acid (-SOH). Lys-457 and Gly-460 together coordinate K(+). Glu-464 functions as the Charge relay system in the catalytic mechanism.

The protein belongs to the aldehyde dehydrogenase family. In terms of assembly, dimer of dimers. The cofactor is K(+).

The catalysed reaction is betaine aldehyde + NAD(+) + H2O = glycine betaine + NADH + 2 H(+). It functions in the pathway amine and polyamine biosynthesis; betaine biosynthesis via choline pathway; betaine from betaine aldehyde: step 1/1. Its function is as follows. Involved in the biosynthesis of the osmoprotectant glycine betaine. Catalyzes the irreversible oxidation of betaine aldehyde to the corresponding acid. This chain is Betaine aldehyde dehydrogenase, found in Pectobacterium atrosepticum (strain SCRI 1043 / ATCC BAA-672) (Erwinia carotovora subsp. atroseptica).